A 184-amino-acid polypeptide reads, in one-letter code: Ribosome-recycling factor (184 aa).

It belongs to the RRF family.

The protein resides in the cytoplasm. Responsible for the release of ribosomes from messenger RNA at the termination of protein biosynthesis. May increase the efficiency of translation by recycling ribosomes from one round of translation to another. This Borrelia hermsii (strain HS1 / DAH) protein is Ribosome-recycling factor.